A 123-amino-acid polypeptide reads, in one-letter code: Large ribosomal subunit protein uL14 (123 aa).

Belongs to the universal ribosomal protein uL14 family. Part of the 50S ribosomal subunit. Forms a cluster with proteins L3 and L19. In the 70S ribosome, L14 and L19 interact and together make contacts with the 16S rRNA in bridges B5 and B8.

Its function is as follows. Binds to 23S rRNA. Forms part of two intersubunit bridges in the 70S ribosome. The sequence is that of Large ribosomal subunit protein uL14 from Actinobacillus pleuropneumoniae serotype 7 (strain AP76).